The chain runs to 389 residues: E3 ubiquitin-protein ligase E3D (389 aa).

N-acetylalanine is present on alanine 2. The short motif at 129–159 (PLPSENWGALVGEWCCHPDPFANKPLHPQEN) is the BRAT1-like motif element. A Zn(2+)-binding site is contributed by cysteine 144. The segment at 235 to 257 (QSSERSFPIIPRPRFVQSVIAQC) is interaction with UBE2C. An HECT-like region spans residues 353–389 (LPSATCLELLLILSKSNANLPSSLRHMNSFQVAFLKI).

Interacts with UBE2C/UbcH10 (E2 ubiquitin-conjugating enzyme). In vitro, interacts with cyclin-B. Post-translationally, ubiquitinated by UBCH10 (E2 ubiquitin-conjugating enzyme).

The protein localises to the cytoplasm. It carries out the reaction S-ubiquitinyl-[E2 ubiquitin-conjugating enzyme]-L-cysteine + [acceptor protein]-L-lysine = [E2 ubiquitin-conjugating enzyme]-L-cysteine + N(6)-ubiquitinyl-[acceptor protein]-L-lysine.. Its pathway is protein modification; protein ubiquitination. Its function is as follows. E3 ubiquitin-protein ligase which accepts ubiquitin from specific E2 ubiquitin-conjugating enzymes, and transfers it to substrates, generally promoting their degradation by the proteasome. Independently of its E3 ubiquitin-protein ligase activity, acts as an inhibitor of CPSF3 endonuclease activity by blocking CPSF3 active site. The polypeptide is E3 ubiquitin-protein ligase E3D (UBE3D) (Pongo abelii (Sumatran orangutan)).